The primary structure comprises 84 residues: RNA-binding protein Hfq (84 aa).

Residues 10–70 (DNVLNQVRKN…VSTIIPGKTL (61 aa)) enclose the Sm domain.

This sequence belongs to the Hfq family. Homohexamer.

Its function is as follows. RNA chaperone that binds small regulatory RNA (sRNAs) and mRNAs to facilitate mRNA translational regulation in response to envelope stress, environmental stress and changes in metabolite concentrations. Also binds with high specificity to tRNAs. The sequence is that of RNA-binding protein Hfq from Natranaerobius thermophilus (strain ATCC BAA-1301 / DSM 18059 / JW/NM-WN-LF).